The chain runs to 92 residues: Small ribosomal subunit protein uS19c (92 aa).

This sequence belongs to the universal ribosomal protein uS19 family.

The protein resides in the plastid. Its subcellular location is the chloroplast. In terms of biological role, protein S19 forms a complex with S13 that binds strongly to the 16S ribosomal RNA. The sequence is that of Small ribosomal subunit protein uS19c (rps19) from Guillardia theta (Cryptophyte).